Consider the following 312-residue polypeptide: 1-phosphofructokinase (312 aa).

Residues 223-228 and 254-255 each bind ATP; these read SLGAEG and GD. D255 (proton acceptor) is an active-site residue.

This sequence belongs to the carbohydrate kinase PfkB family.

It catalyses the reaction beta-D-fructose 1-phosphate + ATP = beta-D-fructose 1,6-bisphosphate + ADP + H(+). Functionally, catalyzes the ATP-dependent phosphorylation of fructose-l-phosphate to fructose-l,6-bisphosphate. In Escherichia coli O157:H7, this protein is 1-phosphofructokinase (fruK).